We begin with the raw amino-acid sequence, 60 residues long: Large ribosomal subunit protein uL30 (60 aa).

It belongs to the universal ribosomal protein uL30 family. Part of the 50S ribosomal subunit.

This chain is Large ribosomal subunit protein uL30, found in Verminephrobacter eiseniae (strain EF01-2).